The following is a 347-amino-acid chain: A-type ATP synthase subunit C (347 aa).

This sequence belongs to the V-ATPase V0D/AC39 subunit family. As to quaternary structure, has multiple subunits with at least A(3), B(3), C, D, E, F, H, I and proteolipid K(x).

The protein localises to the cell membrane. Component of the A-type ATP synthase that produces ATP from ADP in the presence of a proton gradient across the membrane. The chain is A-type ATP synthase subunit C from Haloquadratum walsbyi (strain DSM 16790 / HBSQ001).